The sequence spans 315 residues: Peroxidase 4 (315 aa).

The first 19 residues, 1–19 (MAIFKILVLLLSLCCFSQA), serve as a signal peptide directing secretion. Position 20 is a pyrrolidone carboxylic acid (Gln20). Intrachain disulfides connect Cys30-Cys110, Cys63-Cys68, Cys116-Cys311, and Cys195-Cys221. His61 (proton acceptor) is an active-site residue. 5 residues coordinate Ca(2+): Asp62, Val65, Gly67, Asp69, and Ser71. Pro158 serves as a coordination point for substrate. A heme b-binding site is contributed by His188. Position 189 (Thr189) interacts with Ca(2+). A glycan (N-linked (GlcNAc...) asparagine) is linked at Asn205. The Ca(2+) site is built by Asp234, Thr237, and Asp242.

It belongs to the peroxidase family. Classical plant (class III) peroxidase subfamily. Requires heme b as cofactor. Ca(2+) serves as cofactor.

It is found in the secreted. The enzyme catalyses 2 a phenolic donor + H2O2 = 2 a phenolic radical donor + 2 H2O. Functionally, removal of H(2)O(2), oxidation of toxic reductants, biosynthesis and degradation of lignin, suberization, auxin catabolism, response to environmental stresses such as wounding, pathogen attack and oxidative stress. These functions might be dependent on each isozyme/isoform in each plant tissue. This is Peroxidase 4 (PER4) from Arabidopsis thaliana (Mouse-ear cress).